A 203-amino-acid chain; its full sequence is Cold-regulated 413 plasma membrane protein 2 (203 aa).

Residues 1–43 (MGRMDYLAMKTDDVDTVALVNSDMEELKVAAKKLFSDVSKLGG) lie on the Extracellular side of the membrane. Residues 44–64 (LGFGVSFLKFLASFAAIYLLI) traverse the membrane as a helical segment. Residues 65-74 (LDRTNWKTKM) lie on the Cytoplasmic side of the membrane. The helical transmembrane segment at 75–95 (LTSLLIPYIFLSLPSVIFNFL) threads the bilayer. The Extracellular segment spans residues 96–98 (SGD). The helical transmembrane segment at 99–119 (VGKWIAFVAVVLRLFFPKHFP) threads the bilayer. A topological domain (cytoplasmic) is located at residue Asp-120. The helical transmembrane segment at 121-141 (WLEMPGSLILLLVVSPHFLAH) threads the bilayer. Over 142-144 (HIR) the chain is Extracellular. A helical transmembrane segment spans residues 145–165 (GTWIGTVISLFIGCYLLQEHI). Topologically, residues 166–179 (RASGGFRNSFTQPR) are cytoplasmic. A helical membrane pass occupies residues 180–200 (GVSNTLGIILLLVYPVWALIV). Residues 201 to 203 (RVM) are Extracellular-facing.

The protein belongs to the Cold-regulated 413 protein family.

The protein resides in the cell membrane. The chain is Cold-regulated 413 plasma membrane protein 2 (COR413PM2) from Arabidopsis thaliana (Mouse-ear cress).